The chain runs to 316 residues: Methionyl-tRNA formyltransferase (316 aa).

112-115 (SLLP) contributes to the (6S)-5,6,7,8-tetrahydrofolate binding site.

This sequence belongs to the Fmt family.

It carries out the reaction L-methionyl-tRNA(fMet) + (6R)-10-formyltetrahydrofolate = N-formyl-L-methionyl-tRNA(fMet) + (6S)-5,6,7,8-tetrahydrofolate + H(+). Its function is as follows. Attaches a formyl group to the free amino group of methionyl-tRNA(fMet). The formyl group appears to play a dual role in the initiator identity of N-formylmethionyl-tRNA by promoting its recognition by IF2 and preventing the misappropriation of this tRNA by the elongation apparatus. The sequence is that of Methionyl-tRNA formyltransferase from Glaesserella parasuis serovar 5 (strain SH0165) (Haemophilus parasuis).